The following is a 331-amino-acid chain: MAQLFYDSDADLSLLSGKTVAIIGYGSQGHAHALNLKDSGINVVVGLYDGSRSASKAIADGLEVLSVGEASAKADWIMVLLPDEFQKDVYNKEISPHLQPGKVLSFAHGFNIRFELIKPPSFVDVVMIAPKGPGHTVRWEFQNGQGVPALFAIEQDASGKARDLAMAYAKGIGGTRAGILETNFKEETETDLFGEQAVLCGGLSALVKAGFETLVDAGYQPELAYFECLHEVKLIVDLMVKGGLTAMRDSISNTAEYGDYISGPRLITSETKAEMKRILSDIQDGTFARNFVAECEAGKPEMKRIRNEDAALPVEQVGKGLRAMFSWLKTD.

The KARI N-terminal Rossmann domain maps to Ala2 to Thr182. NADP(+)-binding positions include Tyr25 to Gln28, Ser51, Ser53, and Asp83 to Gln86. Residue His108 is part of the active site. Gly134 provides a ligand contact to NADP(+). The KARI C-terminal knotted domain occupies Asn183–Leu328. Mg(2+) is bound by residues Asp191, Glu195, Glu227, and Glu231. Ser252 serves as a coordination point for substrate.

Belongs to the ketol-acid reductoisomerase family. Mg(2+) is required as a cofactor.

It catalyses the reaction (2R)-2,3-dihydroxy-3-methylbutanoate + NADP(+) = (2S)-2-acetolactate + NADPH + H(+). It carries out the reaction (2R,3R)-2,3-dihydroxy-3-methylpentanoate + NADP(+) = (S)-2-ethyl-2-hydroxy-3-oxobutanoate + NADPH + H(+). It participates in amino-acid biosynthesis; L-isoleucine biosynthesis; L-isoleucine from 2-oxobutanoate: step 2/4. It functions in the pathway amino-acid biosynthesis; L-valine biosynthesis; L-valine from pyruvate: step 2/4. Its function is as follows. Involved in the biosynthesis of branched-chain amino acids (BCAA). Catalyzes an alkyl-migration followed by a ketol-acid reduction of (S)-2-acetolactate (S2AL) to yield (R)-2,3-dihydroxy-isovalerate. In the isomerase reaction, S2AL is rearranged via a Mg-dependent methyl migration to produce 3-hydroxy-3-methyl-2-ketobutyrate (HMKB). In the reductase reaction, this 2-ketoacid undergoes a metal-dependent reduction by NADPH to yield (R)-2,3-dihydroxy-isovalerate. The chain is Ketol-acid reductoisomerase (NADP(+)) from Prochlorococcus marinus (strain MIT 9211).